The following is a 282-amino-acid chain: Bis(5'-nucleosyl)-tetraphosphatase, symmetrical (282 aa).

The protein belongs to the Ap4A hydrolase family.

The catalysed reaction is P(1),P(4)-bis(5'-adenosyl) tetraphosphate + H2O = 2 ADP + 2 H(+). Hydrolyzes diadenosine 5',5'''-P1,P4-tetraphosphate to yield ADP. The protein is Bis(5'-nucleosyl)-tetraphosphatase, symmetrical of Salmonella paratyphi A (strain ATCC 9150 / SARB42).